We begin with the raw amino-acid sequence, 449 residues long: Tripartite motif-containing protein 64 (449 aa).

An RING-type zinc finger spans residues 15–56 (CCICVNYFIDPVTIDCGHSFCRPCLCLCSEEGRAPMRCPSCR). Residues 87–128 (SSDNICVLHEETKELFCEADKRLLCGPCSESPEHMAHSHSPI) form a B box-type zinc finger. Residues Cys-92, His-95, Cys-114, and His-120 each contribute to the Zn(2+) site. Residues 189–225 (LDEEEQRHLQALEREAEELFQQLQDSQVRMTQHLERM) adopt a coiled-coil conformation. A B30.2/SPRY domain is found at 269–449 (LTSWCITGVL…LRPFFCFGCT (181 aa)).

It belongs to the TRIM/RBCC family.

The chain is Tripartite motif-containing protein 64 (TRIM64) from Homo sapiens (Human).